The following is a 207-amino-acid chain: Small ribosomal subunit protein uS4 (207 aa).

Residues 26–53 are disordered; the sequence is KPFDVKTKKHAKAPGQHGQARGKQSEYS. Residues 97–159 form the S4 RNA-binding domain; it reads SRLDNVVYRM…AKQQLRIKNA (63 aa).

This sequence belongs to the universal ribosomal protein uS4 family. Part of the 30S ribosomal subunit. Contacts protein S5. The interaction surface between S4 and S5 is involved in control of translational fidelity.

Its function is as follows. One of the primary rRNA binding proteins, it binds directly to 16S rRNA where it nucleates assembly of the body of the 30S subunit. Functionally, with S5 and S12 plays an important role in translational accuracy. The chain is Small ribosomal subunit protein uS4 from Acinetobacter baylyi (strain ATCC 33305 / BD413 / ADP1).